Reading from the N-terminus, the 93-residue chain is Phosphoribosyl-ATP pyrophosphatase (93 aa).

This sequence belongs to the PRA-PH family.

It localises to the cytoplasm. It catalyses the reaction 1-(5-phospho-beta-D-ribosyl)-ATP + H2O = 1-(5-phospho-beta-D-ribosyl)-5'-AMP + diphosphate + H(+). It participates in amino-acid biosynthesis; L-histidine biosynthesis; L-histidine from 5-phospho-alpha-D-ribose 1-diphosphate: step 2/9. The polypeptide is Phosphoribosyl-ATP pyrophosphatase (Mycobacterium sp. (strain JLS)).